We begin with the raw amino-acid sequence, 316 residues long: Ribosomal RNA small subunit methyltransferase H (316 aa).

Residues Ala-35–His-37, Asp-55, Phe-84, Asp-105, and Gln-112 each bind S-adenosyl-L-methionine.

This sequence belongs to the methyltransferase superfamily. RsmH family.

The protein resides in the cytoplasm. It carries out the reaction cytidine(1402) in 16S rRNA + S-adenosyl-L-methionine = N(4)-methylcytidine(1402) in 16S rRNA + S-adenosyl-L-homocysteine + H(+). Specifically methylates the N4 position of cytidine in position 1402 (C1402) of 16S rRNA. This is Ribosomal RNA small subunit methyltransferase H from Streptococcus pneumoniae (strain 70585).